Reading from the N-terminus, the 593-residue chain is MYKNQLQELAQRSCFNLPSYACIREGPDHAPRFKATVNFNGETFESPAFCSTLRLAEHAAAEVALNELSKRGPSSSLAAKVLDETGIYKNLLQETAHRAGLKLPVYTTIRSGPGHTPVFTCTVELAGMTFTGNPGKTKKQAQKNAAMAAWSELKQLPRVGEPSSSSCPPDHDDDDQEQIIVARTLASLNQTNGGKTPQQKEKQQSSNRPSSRRPSYPKSNASFYGRLHLQKHAYPSVPPEQAMYHMWHQVQATQQKPHFPMVPTMGSTGFPPPPTVLHMYPPPRGQFTMPSSQDGLGLIPCYPEASPVLPRYFSPYPASFVPRRPLPVNVHKIHEKRLVGADMVELPDAAVFSRYTAPDFSGTSENAVQDNKKEEYTESSPASEQESKSHTASSSATRSPSQQLESNQDIEIMGGLRLESKKPAEQPPESSPSRVNPVLLCETGQRHHYSSVRHGDPVHRNSPQISVATSPSPIRRGDPAHINIPQISVATPPECRSPRAQAPPRFGTRMPVNLPSSLYQQRPPWLAASVTIRTTIPVCSARPNVVNSSAGAAQPAVQILSASPRKEEPEARTNTSDTSNAATASSELNKLHI.

DRBM domains lie at Met-1–Lys-70 and Ile-87–Gln-155. The span at Leu-188–Pro-197 shows a compositional bias: polar residues. Disordered regions lie at residues Leu-188–Ala-221, Ala-357–Gln-408, and Val-546–Ile-593. Residues Ser-205–Ser-219 show a composition bias toward low complexity. The span at Glu-378–Gln-408 shows a compositional bias: polar residues. Residues Arg-572–Ser-586 are compositionally biased toward low complexity.

In terms of biological role, binds double-stranded RNA. This Oryza sativa subsp. japonica (Rice) protein is Double-stranded RNA-binding protein 2 (DRB2).